Reading from the N-terminus, the 524-residue chain is Zinc finger CCCH-type with G patch domain-containing protein (524 aa).

The disordered stretch occupies residues 105 to 142 (SEESQPLGSNDETSTCSKGSEEEEEEEEEEEDNTSGMK). Residues 106-122 (EESQPLGSNDETSTCSK) show a composition bias toward polar residues. A compositionally biased stretch (acidic residues) spans 125-137 (EEEEEEEEEEEDN). A C3H1-type zinc finger spans residues 184–210 (KAMKPCPFFLDGKCLFNDNCRFSHGQV). Residues 279–298 (RGSDSSSSSSSDEEEDGAAE) form a disordered region. In terms of domain architecture, G-patch spans 326 to 372 (TRGIGSKLLVRMGYEFGKGLGRNAEGRVEPIQAVVLPKGKSLDQCME). 2 disordered regions span residues 375 to 402 (QRKK…GGAK) and 500 to 524 (GLQQ…MTEF). Basic residues predominate over residues 376–393 (RKKAGGKHKHKTSKRRPK).

The protein localises to the nucleus. Its function is as follows. Transcription repressor that specifically binds the 5'-GGAG[GA]A[GA]A-3' consensus sequence. Represses transcription by recruiting the chromatin multiprotein complex NuRD to target promoters. Negatively regulates expression of EGFR, a gene involved in cell proliferation, survival and migration. This chain is Zinc finger CCCH-type with G patch domain-containing protein (zgpat), found in Xenopus laevis (African clawed frog).